A 313-amino-acid polypeptide reads, in one-letter code: Nucleotide-binding protein Swit_0399 (313 aa).

20 to 27 (GMSGSGKK) is a binding site for ATP. 73–76 (DSRT) serves as a coordination point for GTP. Residues 289–313 (PTVRHRDLTRQKSNAEESTVPGVGS) are disordered. Over residues 292–303 (RHRDLTRQKSNA) the composition is skewed to basic and acidic residues.

Belongs to the RapZ-like family.

Displays ATPase and GTPase activities. This chain is Nucleotide-binding protein Swit_0399, found in Rhizorhabdus wittichii (strain DSM 6014 / CCUG 31198 / JCM 15750 / NBRC 105917 / EY 4224 / RW1) (Sphingomonas wittichii).